The following is a 170-amino-acid chain: Superoxide dismutase [Fe] (170 aa).

Residues histidine 27, histidine 81, aspartate 163, and histidine 167 each contribute to the Fe cation site.

It belongs to the iron/manganese superoxide dismutase family. As to quaternary structure, homodimer. The cofactor is Fe cation.

The catalysed reaction is 2 superoxide + 2 H(+) = H2O2 + O2. Functionally, destroys superoxide anion radicals which are normally produced within the cells and which are toxic to biological systems. The protein is Superoxide dismutase [Fe] (sodA) of Raoultella planticola (Klebsiella planticola).